The sequence spans 259 residues: Ribosomal RNA small subunit methyltransferase A (259 aa).

S-adenosyl-L-methionine contacts are provided by Asn-13, Thr-15, Gly-40, Glu-61, Asp-85, and Asn-105.

Belongs to the class I-like SAM-binding methyltransferase superfamily. rRNA adenine N(6)-methyltransferase family. RsmA subfamily.

The protein resides in the cytoplasm. The enzyme catalyses adenosine(1518)/adenosine(1519) in 16S rRNA + 4 S-adenosyl-L-methionine = N(6)-dimethyladenosine(1518)/N(6)-dimethyladenosine(1519) in 16S rRNA + 4 S-adenosyl-L-homocysteine + 4 H(+). Functionally, specifically dimethylates two adjacent adenosines (A1518 and A1519) in the loop of a conserved hairpin near the 3'-end of 16S rRNA in the 30S particle. May play a critical role in biogenesis of 30S subunits. This Mycoplasma genitalium (strain ATCC 33530 / DSM 19775 / NCTC 10195 / G37) (Mycoplasmoides genitalium) protein is Ribosomal RNA small subunit methyltransferase A.